Reading from the N-terminus, the 391-residue chain is NADH-quinone oxidoreductase subunit D (391 aa).

Belongs to the complex I 49 kDa subunit family. As to quaternary structure, NDH-1 is composed of 14 different subunits. Subunits NuoB, C, D, E, F, and G constitute the peripheral sector of the complex.

The protein localises to the cell inner membrane. It carries out the reaction a quinone + NADH + 5 H(+)(in) = a quinol + NAD(+) + 4 H(+)(out). NDH-1 shuttles electrons from NADH, via FMN and iron-sulfur (Fe-S) centers, to quinones in the respiratory chain. The immediate electron acceptor for the enzyme in this species is believed to be ubiquinone. Couples the redox reaction to proton translocation (for every two electrons transferred, four hydrogen ions are translocated across the cytoplasmic membrane), and thus conserves the redox energy in a proton gradient. This is NADH-quinone oxidoreductase subunit D from Rickettsia bellii (strain OSU 85-389).